We begin with the raw amino-acid sequence, 88 residues long: Small ribosomal subunit protein bS20 (88 aa).

Belongs to the bacterial ribosomal protein bS20 family.

Binds directly to 16S ribosomal RNA. In Rhodopseudomonas palustris (strain BisB18), this protein is Small ribosomal subunit protein bS20.